The following is a 389-amino-acid chain: Na(+)/H(+) antiporter NhaA 1 (389 aa).

11 helical membrane passes run Ala-14–Leu-34, Phe-47–Ile-67, Ile-87–Phe-107, Gly-117–Gly-137, Val-146–Phe-166, Leu-171–Ala-191, Leu-197–His-217, Val-252–Val-272, Met-280–Phe-300, Ile-321–Leu-341, and Leu-356–Ser-376.

Belongs to the NhaA Na(+)/H(+) (TC 2.A.33) antiporter family.

The protein localises to the cell inner membrane. It carries out the reaction Na(+)(in) + 2 H(+)(out) = Na(+)(out) + 2 H(+)(in). Functionally, na(+)/H(+) antiporter that extrudes sodium in exchange for external protons. The protein is Na(+)/H(+) antiporter NhaA 1 of Vibrio vulnificus (strain CMCP6).